A 270-amino-acid polypeptide reads, in one-letter code: Sorting nexin-11 (270 aa).

Residues Val16 to Val132 enclose the PX domain. Residues Arg59, Lys85, and Arg99 each coordinate a 1,2-diacyl-sn-glycero-3-phospho-(1D-myo-inositol-3-phosphate). The segment at Ile135–Val139 is important for membrane trafficking. A compositionally biased stretch (basic and acidic residues) spans Ser168–Gln177. A disordered region spans residues Ser168 to His203.

It belongs to the sorting nexin family. Monomer. Interacts with TRPV3; this interaction promotes TRPV3 trafficking from the cell membrane to lysosome for degradation.

It localises to the cell membrane. Its subcellular location is the endosome. The protein localises to the cytoplasm. Its function is as follows. Phosphoinositide-binding protein involved in protein sorting and membrane trafficking in endosomes. Regulates the levels of TRPV3 by promoting its trafficking from the cell membrane to lysosome for degradation. This Homo sapiens (Human) protein is Sorting nexin-11 (SNX11).